The primary structure comprises 2605 residues: Non-reducing polyketide synthase dbaI (2605 aa).

The N-terminal acylcarrier protein transacylase domain (SAT) stretch occupies residues 97-243; that stretch reads PNTLLIPLVM…PASEISDLHR (147 aa). Residue Cys-144 is the Nucleophile; for transacylase activity of the active site. The active-site Proton donor/acceptor; for transacylase activity is the His-262. Residues 382–798 form the Ketosynthase family 3 (KS3) domain; the sequence is ENDIAVVGMS…GSNASIVVTQ (417 aa). Catalysis depends on for beta-ketoacyl synthase activity residues Cys-547, His-682, and His-721. Positions 908 to 1195 are malonyl-CoA:ACP transacylase (MAT) domain; that stretch reads FGGQVSTFVG…VTNMASRALG (288 aa). The tract at residues 1285-1420 is N-terminal hotdog fold; sequence PNTLLTFVGY…GRVIFRSISD (136 aa). A PKS/mFAS DH domain is found at 1285–1596; that stretch reads PNTLLTFVGY…YVKIPKASMS (312 aa). Residues 1316–1594 are product template (PT) domain; the sequence is LIRGHIIAQT…ISYVKIPKAS (279 aa). His-1320 acts as the Proton acceptor; for dehydratase activity in catalysis. The segment at 1447–1596 is C-terminal hotdog fold; sequence EVDEVLQNRN…YVKIPKASMS (150 aa). Asp-1504 acts as the Proton donor; for dehydratase activity in catalysis. Residues 1665-1739 form the Carrier domain; it reads GQLTQRIKSI…SLIKCVRKAM (75 aa). The residue at position 1699 (Ser-1699) is an O-(pantetheine 4'-phosphoryl)serine. The disordered stretch occupies residues 1742–1780; that stretch reads DADSAEYTTEQSTSEAADSDDKSTNYTTPSTPGEEALDM. Over residues 1747–1757 the composition is skewed to polar residues; sequence EYTTEQSTSEA. The segment at 1963–2151 is methyltransferase domain; sequence DWPLNRLFYR…VGYGHVDWTD (189 aa). The tract at residues 2230 to 2473 is NADPH-binding (R) domain; that stretch reads VTGATGSLGC…LSWTPVDVVA (244 aa).

It catalyses the reaction 4 malonyl-CoA + acetyl-CoA + AH2 + S-adenosyl-L-methionine + 3 H(+) = 2,4-dihydroxy-3-methyl-6-(2-oxopropyl)benzaldehyde + A + S-adenosyl-L-homocysteine + 4 CO2 + 5 CoA + H2O. Its pathway is secondary metabolite biosynthesis. Its function is as follows. Non-reducing polyketide synthase; part of the gene cluster that mediates the biosynthesis of the antibiotic 2,4-dihydroxy-3-methyl-6-(2-oxopropyl)benzaldehyde (DHMBA) and its derivatives. The direct non-reducing polyketide synthase dbaI product is 2,4-dihydroxy-3-methyl-6-(2-oxopropyl)benzaldehyde (DHMBA), produced by condensation of one acetyl-CoA starter unit with 4 malonyl-CoA units and one methylation step. The FAD-dependent monooxygenase dbaH is responsible for the synthesis of yellow pigments derived from the oxidation of DHMBA. The roles of dbaB, C, E and F have still to be determined. This chain is Non-reducing polyketide synthase dbaI, found in Emericella nidulans (strain FGSC A4 / ATCC 38163 / CBS 112.46 / NRRL 194 / M139) (Aspergillus nidulans).